A 161-amino-acid polypeptide reads, in one-letter code: Endoribonuclease YbeY (161 aa).

Residues histidine 121, histidine 125, and histidine 131 each coordinate Zn(2+).

It belongs to the endoribonuclease YbeY family. The cofactor is Zn(2+).

Its subcellular location is the cytoplasm. Single strand-specific metallo-endoribonuclease involved in late-stage 70S ribosome quality control and in maturation of the 3' terminus of the 16S rRNA. The sequence is that of Endoribonuclease YbeY from Stenotrophomonas maltophilia (strain K279a).